The following is a 434-amino-acid chain: MKNNKLGLRIGIVGGGISGVALALELCRYSHIQVQLFEAAPAFGEVGAGVSFGPNAVRAIVGLGLGEAYLQVADRTSEPWEDVWFEWRRGSDASYLGATIAPGVGQSSVHRADFIDALVTHLPEGIAQFGKRATQVEQQGGEVQVLFTDGTEYRCDLLIGADGIKSALRSHVLEGQGLAPQVPRFSGTCAYRGMVDSLHLREAYRAHGIDEHLVDVPQMYLGLDGHILTFPVRNGGIINVVAFISDRSEPKPTWPADAPWVREASQREMLDAFAGWGDAARALLECIPAPTLWALHDLAELPGYVHGRVVLIGDAAHAMLPHQGAGAGQGLEDAYFLARLLGDTQADAGNLAELLEAYDDLRRPRACRVQQTSWETGELYELRDPVVGANEQLLGENLATRFDWLWNHDLDTDLAEARARLGWEHGGGGALRQG.

Position 9-38 (9-38 (RIGIVGGGISGVALALELCRYSHIQVQLFE)) interacts with FAD.

In terms of assembly, monomer. It depends on FAD as a cofactor.

The enzyme catalyses salicylate + NADH + O2 + 2 H(+) = catechol + CO2 + NAD(+) + H2O. Its pathway is aromatic compound metabolism; naphthalene degradation. The polypeptide is Salicylate hydroxylase (nahG) (Pseudomonas putida (Arthrobacter siderocapsulatus)).